The primary structure comprises 239 residues: Fatty acid metabolism regulator protein (239 aa).

One can recognise an HTH gntR-type domain in the interval 6-74 (KGPASFAEKY…HGKPTQVNNF (69 aa)). The segment at residues 34–53 (ERELSELIGVTRTTLREVLQ) is a DNA-binding region (H-T-H motif).

Homodimer.

It localises to the cytoplasm. Functionally, multifunctional regulator of fatty acid metabolism. In Shewanella frigidimarina (strain NCIMB 400), this protein is Fatty acid metabolism regulator protein.